The primary structure comprises 438 residues: Chromosomal replication initiator protein DnaA (438 aa).

Positions 1–71 are domain I, interacts with DnaA modulators; sequence MTTKEFLTII…CFEIYDGSKP (71 aa). The segment at 71-100 is domain II; that stretch reads PTIEIKLSNEKKSKKEILKEQTQNESTEST. Residues 101–315 are domain III, AAA+ region; sequence ILNPSYTFDS…GVLIRINASA (215 aa). Gly-145, Gly-147, Lys-148, and Thr-149 together coordinate ATP. The segment at 316–438 is domain IV, binds dsDNA; sequence SLLNQEITLP…LKNKIINSRE (123 aa).

It belongs to the DnaA family. As to quaternary structure, oligomerizes as a right-handed, spiral filament on DNA at oriC.

It localises to the cytoplasm. Functionally, plays an essential role in the initiation and regulation of chromosomal replication. ATP-DnaA binds to the origin of replication (oriC) to initiate formation of the DNA replication initiation complex once per cell cycle. Binds the DnaA box (a 9 base pair repeat at the origin) and separates the double-stranded (ds)DNA. Forms a right-handed helical filament on oriC DNA; dsDNA binds to the exterior of the filament while single-stranded (ss)DNA is stabiized in the filament's interior. The ATP-DnaA-oriC complex binds and stabilizes one strand of the AT-rich DNA unwinding element (DUE), permitting loading of DNA polymerase. After initiation quickly degrades to an ADP-DnaA complex that is not apt for DNA replication. Binds acidic phospholipids. The sequence is that of Chromosomal replication initiator protein DnaA from Aliarcobacter butzleri (strain RM4018) (Arcobacter butzleri).